The following is a 94-amino-acid chain: MSTPKKDKNNKEVDKTDVKTPVKVRRAKKKICAFCVDKVERIDYKDVAKLKKYISERGKILPRRISGNCAKHQRQLTVAIKRARHIALLPYTAD.

This sequence belongs to the bacterial ribosomal protein bS18 family. Part of the 30S ribosomal subunit. Forms a tight heterodimer with protein bS6.

Functionally, binds as a heterodimer with protein bS6 to the central domain of the 16S rRNA, where it helps stabilize the platform of the 30S subunit. This is Small ribosomal subunit protein bS18 from Acetivibrio thermocellus (strain ATCC 27405 / DSM 1237 / JCM 9322 / NBRC 103400 / NCIMB 10682 / NRRL B-4536 / VPI 7372) (Clostridium thermocellum).